The chain runs to 455 residues: Ribosomal protein uS12 methylthiotransferase RimO (455 aa).

The MTTase N-terminal domain maps to 30-140 (PTIGMVSLGC…VLDAVHGAVP (111 aa)). [4Fe-4S] cluster-binding residues include Cys39, Cys75, Cys104, Cys171, Cys175, and Cys178. In terms of domain architecture, Radical SAM core spans 157–386 (LTPRHFSYLK…MEKAQAISEA (230 aa)). Residues 389–455 (AAKVGRRIEV…GEYDLWGRPV (67 aa)) enclose the TRAM domain.

The protein belongs to the methylthiotransferase family. RimO subfamily. The cofactor is [4Fe-4S] cluster.

It localises to the cytoplasm. It carries out the reaction L-aspartate(89)-[ribosomal protein uS12]-hydrogen + (sulfur carrier)-SH + AH2 + 2 S-adenosyl-L-methionine = 3-methylsulfanyl-L-aspartate(89)-[ribosomal protein uS12]-hydrogen + (sulfur carrier)-H + 5'-deoxyadenosine + L-methionine + A + S-adenosyl-L-homocysteine + 2 H(+). Its function is as follows. Catalyzes the methylthiolation of an aspartic acid residue of ribosomal protein uS12. This chain is Ribosomal protein uS12 methylthiotransferase RimO, found in Cereibacter sphaeroides (strain ATCC 17029 / ATH 2.4.9) (Rhodobacter sphaeroides).